The sequence spans 87 residues: Acyl carrier protein TtuC (87 aa).

The Carrier domain maps to 11–87 (ITAEDVQQWL…HALSQFIAAK (77 aa)). At serine 48 the chain carries O-(pantetheine 4'-phosphoryl)serine.

Requires pantetheine 4'-phosphate as cofactor.

Its function is as follows. Carrier protein likely involved in the biosynthesis of a polyyne metabolite. Accepts as substrate the activated form of decanoic acid from TtuA. This is Acyl carrier protein TtuC from Teredinibacter turnerae (strain ATCC 39867 / T7901).